Here is a 312-residue protein sequence, read N- to C-terminus: Ribosomal RNA small subunit methyltransferase H (312 aa).

Residues 32–34 (AGH), D52, F79, D100, and Q107 contribute to the S-adenosyl-L-methionine site.

The protein belongs to the methyltransferase superfamily. RsmH family.

It is found in the cytoplasm. The catalysed reaction is cytidine(1402) in 16S rRNA + S-adenosyl-L-methionine = N(4)-methylcytidine(1402) in 16S rRNA + S-adenosyl-L-homocysteine + H(+). Specifically methylates the N4 position of cytidine in position 1402 (C1402) of 16S rRNA. This Listeria monocytogenes serotype 4b (strain F2365) protein is Ribosomal RNA small subunit methyltransferase H.